The primary structure comprises 1331 residues: MSSKEQQAAGRDFKRNSNAYSSLPPTGTGAGCSGAALGSGTGTGKRARSKQHQLEHEQFGLSNSLSSESIRQACAYYDDELSDEDLIEIQQTPQAFHQQTKQPLQLQPISFRLGDELGDERSAFCGSQEMQQVPLSTPIKQAAETDEALCVLSELDAILDVHDVSQLNGTCSSGSVNSGSDDDKVEDYLMDLDNYLEEMDNALNREDSLIIIDGHTSLKREPRTRTLPLSRKKKSSKKKSEDQEAAQGDFQREHQLRKTFSCSLRPTSQIASSSGSLETSTEPVMDVWRRQSMRRALEQEDTKATVAMEREEDDIPTLLVELPPRRDAEMRRCFSQGDCQASVAPTVGSQMLTEAHIFDNLLQTNARASSEEPRPRQYGRRLEGPPTPVRPLILAQSRPQSAPTRVQMREPQLQDTPTHPIMSTCSELSSARSSRMPSPVSLPSDSSSSGSSSAEHDQEPDPVQTTTMCSASSTTPLEPLHQLQLLLREKCGFNSQWPHAGSRTLALIGCTLGVFNMCRFAVLTINFGGNFLLQFLLLSVIFGIPLLWLQMCLGAKIRAGPVSMWKISPICAGVGIALVMQQCFLALYSTVSLAWILVYLRDVFPTAARSGYRWQEMAFPYRYDASNATGNLTQTVAEYFNVVVLQRLHLANHPDASGIRFHVNDRQLAFYLALIWAAVFLILCKGLKSLGKLAYIIYTLPLVALAVVTAKFVYVVDPSRIQNIFAASDFDDFLVNSNSWTAATQETFLTWGLLGASVIAITSRSHTNANKAALRRDAILLVLFTLIGLGLMALLALCCAQILWQHGYVYVPGSFENPDCYTSIYSLQSNTNPYLLSYPRSLIPHYSSFIGETYRRNRTMIHVESGFQALRFISEIFPAVLSLASDSISWVWAAVAFATFAGFGLAQLCVMWKPISSALGNSTSSVLLSCVTGLLLSIPFATEMGISILYYVDFLLGGSWFIPIIWTAQIFGVFLIRGRPYNGDDLVNDLRLCGSMSAFLALSWNVLLPIGLITLSVVDYKASLSNQFYYWRGKSYFTYWSRKMGSLIQIGVLLVIPVTAIIQIYRYLAHGPPDILERIQLLYRPPEEGEEPRRPSARQTASQSRRNALGQTTEGGQHDAQNDAPPKYTPPPSYTTATGARLAKLLRQSIRRSVRRVLGDSSRTRPVLSLDAESASPAAPPDYLTILTNPAGSSFNADPSPASSSSPESIEIDQRPVGYSQRSQSLGRKLHRSGASTLERRPYTAEDVVTILRSSVRHRQSQGGGNLVTASTLPRPPTAAMSTHLEDASFRSIENLVLNAEPPDRTPGVELELELEAGQAEECARNNTSVI.

Residues 1–62 (MSSKEQQAAG…QLEHEQFGLS (62 aa)) form a disordered region. Residues 16-25 (NSNAYSSLPP) show a composition bias toward polar residues. Over residues 28–43 (TGAGCSGAALGSGTGT) the composition is skewed to gly residues. A glycan (N-linked (GlcNAc...) asparagine) is linked at Asn168. Disordered stretches follow at residues 221–284 (EPRT…TEPV) and 363–473 (QTNA…SASS). Polar residues predominate over residues 258–282 (KTFSCSLRPTSQIASSSGSLETSTE). A compositionally biased stretch (basic and acidic residues) spans 369 to 383 (SSEEPRPRQYGRRLE). The span at 413-436 (LQDTPTHPIMSTCSELSSARSSRM) shows a compositional bias: polar residues. Over residues 437–453 (PSPVSLPSDSSSSGSSS) the composition is skewed to low complexity. A compositionally biased stretch (polar residues) spans 463-473 (VQTTTMCSASS). Helical transmembrane passes span 505-525 (LALIGCTLGVFNMCRFAVLTI), 531-551 (FLLQFLLLSVIFGIPLLWLQM), and 567-587 (ISPICAGVGIALVMQQCFLAL). 2 N-linked (GlcNAc...) asparagine glycosylation sites follow: Asn627 and Asn631. Transmembrane regions (helical) follow at residues 667 to 687 (QLAFYLALIWAAVFLILCKGL), 696 to 716 (IIYTLPLVALAVVTAKFVYVV), 741 to 761 (TAATQETFLTWGLLGASVIAI), and 778 to 798 (AILLVLFTLIGLGLMALLALC). An N-linked (GlcNAc...) asparagine glycan is attached at Asn857. The chain crosses the membrane as a helical span at residues 890–910 (WVWAAVAFATFAGFGLAQLCV). An N-linked (GlcNAc...) asparagine glycan is attached at Asn921. Helical transmembrane passes span 926 to 946 (VLLSCVTGLLLSIPFATEMGI), 956 to 976 (LGGSWFIPIIWTAQIFGVFLI), 998 to 1018 (AFLALSWNVLLPIGLITLSVV), and 1044 to 1064 (MGSLIQIGVLLVIPVTAIIQI). 3 disordered regions span residues 1086-1136 (PEEG…SYTT), 1169-1238 (SLDA…ASTL), and 1256-1275 (VRHRQSQGGGNLVTASTLPR). 2 stretches are compositionally biased toward polar residues: residues 1097–1115 (ARQTASQSRRNALGQTTEG) and 1186–1196 (ILTNPAGSSFN). Residues 1197 to 1209 (ADPSPASSSSPES) are compositionally biased toward low complexity.

The protein belongs to the sodium:neurotransmitter symporter (SNF) (TC 2.A.22) family.

Its subcellular location is the membrane. Putative sodium-dependent transporter which is required for viability, early imaginal disk development and adult motor coordination. Also has a role in the fate commitment of the R3/R4 photoreceptor cells. May function in ommatidial polarity by regulating the activity of the core polarity genes, acting upstream of (or in parallel to) Vang, dsh, pk, stan, and dgo, but downstream or independently of fz. The chain is Sodium-dependent transporter bedraggled from Drosophila melanogaster (Fruit fly).